The sequence spans 458 residues: RuvB-like helicase 1 (458 aa).

Position 71–78 (71–78) interacts with ATP; it reads GGPGTGKT.

The protein belongs to the RuvB family. May form heterododecamers with hel-2/rvb2. Component of the SWR1 chromatin remodeling complex, the INO80 chromatin remodeling complex, and of the R2TP complex.

Its subcellular location is the nucleus. The enzyme catalyses ATP + H2O = ADP + phosphate + H(+). Functionally, DNA helicase which participates in several chromatin remodeling complexes, including the SWR1 and the INO80 complexes. The SWR1 complex mediates the ATP-dependent exchange of histone H2A for the H2A variant H2A.Z leading to transcriptional regulation of selected genes by chromatin remodeling. The INO80 complex remodels chromatin by shifting nucleosomes and is involved in DNA repair. Also involved in pre-rRNA processing. In Neurospora crassa (strain ATCC 24698 / 74-OR23-1A / CBS 708.71 / DSM 1257 / FGSC 987), this protein is RuvB-like helicase 1 (hel-1).